The sequence spans 271 residues: MFSIQQPLLVFSDLDGTLLDSHSYDWQPAAPWLSRLHEANIPVILCSSKTSAEMLYLQKMLGLQGLPLIAENGAVIQLAEQWQDIDGFPRIISGISHGEICQVLNTLREKEHFKFTTFDDVDDATIAEWTGLSRSQAALTQLHEASVTLIWRDSDEHMAQFIARLNELGLQFMQGARFWHVLDASAGKDQAANWIIATYQQLSGRRPTTLGLGDGPNDAPLLEVMDYAVIVKGLNREGVHLHDEDPARVWRTQREGPEGWREGLDHFFSAR.

Asp13 acts as the Nucleophile in catalysis. Asp13, Asp15, and Asp214 together coordinate Mg(2+).

The protein belongs to the HAD-like hydrolase superfamily. MPGP family. It depends on Mg(2+) as a cofactor.

Its subcellular location is the cytoplasm. The catalysed reaction is 2-O-(alpha-D-mannosyl)-3-phosphoglycerate + H2O = (2R)-2-O-(alpha-D-mannosyl)-glycerate + phosphate. This is Mannosyl-3-phosphoglycerate phosphatase (yedP) from Escherichia coli O6:K15:H31 (strain 536 / UPEC).